We begin with the raw amino-acid sequence, 315 residues long: Homoserine O-succinyltransferase (315 aa).

Cys142 functions as the Acyl-thioester intermediate in the catalytic mechanism. Substrate is bound by residues Lys163 and Ser192. Catalysis depends on His235, which acts as the Proton acceptor. The active site involves Glu237. Arg249 provides a ligand contact to substrate. Positions Arg249 to Pro258 are enriched in basic and acidic residues. Positions Arg249–Lys271 are disordered.

Belongs to the MetA family.

It localises to the cytoplasm. The enzyme catalyses L-homoserine + succinyl-CoA = O-succinyl-L-homoserine + CoA. It participates in amino-acid biosynthesis; L-methionine biosynthesis via de novo pathway; O-succinyl-L-homoserine from L-homoserine: step 1/1. Transfers a succinyl group from succinyl-CoA to L-homoserine, forming succinyl-L-homoserine. The protein is Homoserine O-succinyltransferase of Pseudoalteromonas translucida (strain TAC 125).